Reading from the N-terminus, the 367-residue chain is Alginate lyase (367 aa).

The first 24 residues, 1–24 (MTAFKRIFSPALLVLALYGGAAHA), serve as a signal peptide directing secretion. Residues 63–64 (SK), 136–137 (HT), and Tyr-254 contribute to the substrate site.

It belongs to the polysaccharide lyase 5 family.

The protein resides in the periplasm. It catalyses the reaction Eliminative cleavage of alginate to give oligosaccharides with 4-deoxy-alpha-L-erythro-hex-4-enuronosyl groups at their non-reducing ends and beta-D-mannuronate at their reducing end.. Catalyzes the depolymerization of alginate by cleaving the beta-1,4 glycosidic bond between two adjacent sugar residues via a beta-elimination mechanism. May serve to degrade mislocalized alginate that is trapped in the periplasmic space. The polypeptide is Alginate lyase (Pseudomonas putida (strain W619)).